We begin with the raw amino-acid sequence, 666 residues long: MRGCLQLGRWLSAAPRCQAASLRPPTVFPSYRYNRSFSTTTIYYGRSKTTPTKLDLDLEKRIAAIPIERFRNFCIVAHVDHGKSTLSDRLLELTGTIEAGTNKQVLDKLDVERERGITVKAQTCTMIYNYKGEDYLLHLVDTPGHVDFRAEVSRSYASCGGAILLVDASQGVQAQTVANFYLAFAQGLELIPILNKVDLPSSDPERALEQIKNTFEIDTDKAVMVSAKTGLNVPAVLPTVVEKVPAPIGDSTKPLRMLLVDSWYDSYKGVILLVRVFDGEVRAGQQLISFVTGLKYFVGEVGIMYPTETAQTVLRAGQVGYIYFNPGMKRSKEAKIGDTFTRVGYEKVVEPLPGFEEPKSMVFVAVYPVNADLFEHLEDSINQLVLNDRSITVQKESSEALGAGFRMGFLGTLHCSVFEDRLRQEHGASIIITPPSVPVKVVWKSGAEEIITNPAKFPDDDSVRLKVAEVQEPFVLVTLTFPEEYLGKVIELCEANRGEQQSIEYFTATQVIMKYELPLAHLVDDFFGKLKGGTKGYASLDYEESAWRAGNIVRLQLLVNREPVDAVTRIMHSSQVSRQGRIWVTKFKEHVDRQLFEIIIQAAVGKKIIARETIKPYRKDVLAKLHASDVSRRRKLLEKQKEGRKRLRAVGNVVIEHKAFQAFLAK.

Residues 1–44 (MRGCLQLGRWLSAAPRCQAASLRPPTVFPSYRYNRSFSTTTIYY) constitute a mitochondrion transit peptide. A tr-type G domain is found at 68–248 (ERFRNFCIVA…TVVEKVPAPI (181 aa)). Residues 77-84 (AHVDHGKS), 141-145 (DTPGH), and 195-198 (NKVD) contribute to the GTP site.

The protein belongs to the TRAFAC class translation factor GTPase superfamily. Classic translation factor GTPase family. LepA subfamily.

The protein resides in the mitochondrion inner membrane. The enzyme catalyses GTP + H2O = GDP + phosphate + H(+). In terms of biological role, promotes mitochondrial protein synthesis. May act as a fidelity factor of the translation reaction, by catalyzing a one-codon backward translocation of tRNAs on improperly translocated ribosomes. Binds to mitochondrial ribosomes in a GTP-dependent manner. In Penicillium rubens (strain ATCC 28089 / DSM 1075 / NRRL 1951 / Wisconsin 54-1255) (Penicillium chrysogenum), this protein is Translation factor guf1, mitochondrial (guf1).